The following is a 187-amino-acid chain: NADH-quinone oxidoreductase subunit B (187 aa).

[4Fe-4S] cluster contacts are provided by cysteine 46, cysteine 47, cysteine 112, and cysteine 141.

Belongs to the complex I 20 kDa subunit family. As to quaternary structure, NDH-1 is composed of 14 different subunits. Subunits NuoB, C, D, E, F, and G constitute the peripheral sector of the complex. The cofactor is [4Fe-4S] cluster.

The protein localises to the cell inner membrane. It carries out the reaction a quinone + NADH + 5 H(+)(in) = a quinol + NAD(+) + 4 H(+)(out). Functionally, NDH-1 shuttles electrons from NADH, via FMN and iron-sulfur (Fe-S) centers, to quinones in the respiratory chain. The immediate electron acceptor for the enzyme in this species is believed to be ubiquinone. Couples the redox reaction to proton translocation (for every two electrons transferred, four hydrogen ions are translocated across the cytoplasmic membrane), and thus conserves the redox energy in a proton gradient. The chain is NADH-quinone oxidoreductase subunit B from Myxococcus xanthus (strain DK1622).